We begin with the raw amino-acid sequence, 279 residues long: Large ribosomal subunit protein uL2 (279 aa).

The tract at residues 223–279 (TVRGSAMNPNDHPHGGGEGRSPVGMDAPRTPWGKRHMGVKTRNNKKSSTSMIVRRRK) is disordered. Basic residues predominate over residues 254–267 (WGKRHMGVKTRNNK).

This sequence belongs to the universal ribosomal protein uL2 family. Part of the 50S ribosomal subunit. Forms a bridge to the 30S subunit in the 70S ribosome.

Its function is as follows. One of the primary rRNA binding proteins. Required for association of the 30S and 50S subunits to form the 70S ribosome, for tRNA binding and peptide bond formation. It has been suggested to have peptidyltransferase activity; this is somewhat controversial. Makes several contacts with the 16S rRNA in the 70S ribosome. This Ureaplasma parvum serovar 3 (strain ATCC 27815 / 27 / NCTC 11736) protein is Large ribosomal subunit protein uL2.